The following is a 602-amino-acid chain: Elongation factor 4 (602 aa).

The region spanning 2-184 is the tr-type G domain; that stretch reads NHIRNFSIIA…LIVAKVPAPR (183 aa). GTP is bound by residues 14 to 19 and 131 to 134; these read DHGKST and NKMD.

Belongs to the TRAFAC class translation factor GTPase superfamily. Classic translation factor GTPase family. LepA subfamily.

It is found in the cell inner membrane. It carries out the reaction GTP + H2O = GDP + phosphate + H(+). Required for accurate and efficient protein synthesis under certain stress conditions. May act as a fidelity factor of the translation reaction, by catalyzing a one-codon backward translocation of tRNAs on improperly translocated ribosomes. Back-translocation proceeds from a post-translocation (POST) complex to a pre-translocation (PRE) complex, thus giving elongation factor G a second chance to translocate the tRNAs correctly. Binds to ribosomes in a GTP-dependent manner. The polypeptide is Elongation factor 4 (Paracidovorax citrulli (strain AAC00-1) (Acidovorax citrulli)).